Consider the following 736-residue polypeptide: Neprilysin-2 (736 aa).

The Cytoplasmic segment spans residues M1–R19. Residues I20–I40 traverse the membrane as a helical; Signal-anchor for type II membrane protein segment. Residues Y41–W736 are Extracellular-facing. The region spanning V52–W736 is the Peptidase M13 domain. Cystine bridges form between C53–C58, C76–C721, C84–C681, C142–C399, and C608–C733. A coiled-coil region spans residues F103–E123. Zn(2+) is bound at residue H571. E572 is a catalytic residue. 2 residues coordinate Zn(2+): H575 and E633. The active-site Proton donor is the D637.

Belongs to the peptidase M13 family. Zn(2+) serves as cofactor. In terms of tissue distribution, expressed in muscle cells, GLR cells, SMB motor neurons and AIM interneurons.

It localises to the membrane. Its function is as follows. Required for olfactory plasticity, which is the change from positive chemotaxis to dispersal after prolonged exposure to an odorant. Thought to antagonise snet-1 by degrading excess snet-1 peptides and thus enabling olfactory plasticity. In Caenorhabditis elegans, this protein is Neprilysin-2.